An 86-amino-acid polypeptide reads, in one-letter code: Large ribosomal subunit protein bL27 (86 aa).

The segment at 1–24 (MATKKAGGSSRNGRDSAGRRLGVK) is disordered.

Belongs to the bacterial ribosomal protein bL27 family.

This chain is Large ribosomal subunit protein bL27, found in Rickettsia felis (strain ATCC VR-1525 / URRWXCal2) (Rickettsia azadi).